Consider the following 534-residue polypeptide: Peptide chain release factor 3 (534 aa).

The 270-residue stretch at 9–278 folds into the tr-type G domain; it reads ARRRTFAIIS…FFVEHAPSPQ (270 aa). Residues 18-25, 86-90, and 140-143 each bind GTP; these read SHPDAGKT, DTPGH, and NKLD.

It belongs to the TRAFAC class translation factor GTPase superfamily. Classic translation factor GTPase family. PrfC subfamily.

It localises to the cytoplasm. Functionally, increases the formation of ribosomal termination complexes and stimulates activities of RF-1 and RF-2. It binds guanine nucleotides and has strong preference for UGA stop codons. It may interact directly with the ribosome. The stimulation of RF-1 and RF-2 is significantly reduced by GTP and GDP, but not by GMP. The polypeptide is Peptide chain release factor 3 (Xylella fastidiosa (strain M23)).